Here is a 204-residue protein sequence, read N- to C-terminus: Large ribosomal subunit protein uL3 (204 aa).

The protein belongs to the universal ribosomal protein uL3 family. As to quaternary structure, part of the 50S ribosomal subunit. Forms a cluster with proteins L14 and L19.

Its function is as follows. One of the primary rRNA binding proteins, it binds directly near the 3'-end of the 23S rRNA, where it nucleates assembly of the 50S subunit. The chain is Large ribosomal subunit protein uL3 from Azobacteroides pseudotrichonymphae genomovar. CFP2.